We begin with the raw amino-acid sequence, 120 residues long: Putative monooxygenase GME11364 (120 aa).

The ABM domain occupies 9 to 99 (VSVHIRLTVD…ILLKPHEVEL (91 aa)).

The protein belongs to the LsrG family.

It functions in the pathway secondary metabolite biosynthesis. Its function is as follows. Putative monooxygenase; part of the gene cluster that mediates the biosynthesis of dibenzodioxocinones such as pestalotiollide B, a novel class of inhibitors against cholesterol ester transfer protein (CEPT). The biosynthesis initiates from condensation of acetate and malonate units catalyzed by the non-reducing PKS pks8/GME11356. Pks8/GME11356 lacks a thioesterase (TE) domain, which is important to the cyclizing of the third ring of atrochrysone carboxylic acid, and the esterase GME11355 might play the role of TE and catalyzes the cyclization reaction of the C ring. The lactamase-like protein GME11357 (or other beta-lactamases in Pestalotiopsis microspora) probably hydrolyzes the thioester bond between the ACP of pks8/GME11356 and the intermediate to release atrochrysone carboxylic acid, which is spontaneously dehydrates to form endocrocin anthrone. Endocrocin anthrone is further converted to emodin via the endocrocin intermediate. Emodin is then oxidized by several enzymes such as the Baeyer-Villiger oxidase GME11358, the oxidoreductase GME11367, the short chain dehydrogenase/reductase GME11373, as well as by other oxidoreductases from the cluster, to modify the A and C rings and open the B ring, and finally yield monodictyphenone. The prenyltransferase GME11375 may catalyze the addition reaction between the C5 side chains and the carbon bone of dibenzodioxocinones. The remaining biochemical reactions to the final product dibenzodioxocinones should be methylation catalyzed by methyltransferase GME11366 and reduction and lactonization reaction catalyzed by a series of oxidordeuctases. The chain is Putative monooxygenase GME11364 from Pestalotiopsis microspora.